The chain runs to 416 residues: Serine hydroxymethyltransferase (416 aa).

Residues L117 and 121–123 (GHL) each bind (6S)-5,6,7,8-tetrahydrofolate. K226 is subject to N6-(pyridoxal phosphate)lysine. Residue E242 coordinates (6S)-5,6,7,8-tetrahydrofolate.

This sequence belongs to the SHMT family. In terms of assembly, homodimer. Pyridoxal 5'-phosphate is required as a cofactor.

Its subcellular location is the cytoplasm. The catalysed reaction is (6R)-5,10-methylene-5,6,7,8-tetrahydrofolate + glycine + H2O = (6S)-5,6,7,8-tetrahydrofolate + L-serine. Its pathway is one-carbon metabolism; tetrahydrofolate interconversion. It functions in the pathway amino-acid biosynthesis; glycine biosynthesis; glycine from L-serine: step 1/1. Catalyzes the reversible interconversion of serine and glycine with tetrahydrofolate (THF) serving as the one-carbon carrier. This reaction serves as the major source of one-carbon groups required for the biosynthesis of purines, thymidylate, methionine, and other important biomolecules. Also exhibits THF-independent aldolase activity toward beta-hydroxyamino acids, producing glycine and aldehydes, via a retro-aldol mechanism. This is Serine hydroxymethyltransferase from Endomicrobium trichonymphae.